The chain runs to 233 residues: Counting factor-associated protein A (233 aa).

The first 21 residues, 1–21 (MKLLNSLILLVLTCLVSSINT), serve as a signal peptide directing secretion. N-linked (GlcNAc...) asparagine glycans are attached at residues N37 and N189.

The protein localises to the secreted. In Dictyostelium discoideum (Social amoeba), this protein is Counting factor-associated protein A (cfaA).